We begin with the raw amino-acid sequence, 780 residues long: Zinc finger and SCAN domain-containing protein 10 (780 aa).

The segment at 1–38 (MLGESVPAAVEQEQLGEVKLEEEEAVSPEDPRRPESRL) is disordered. Over residues 29–38 (EDPRRPESRL) the composition is skewed to basic and acidic residues. Residues 56-126 (MGPRASLSRL…LLLEGIHREP (71 aa)) form the SCAN box domain. 2 disordered regions span residues 153 to 237 (GCAS…SRDQ) and 255 to 324 (KAWP…GSLL). Residues Ser162 and Ser208 each carry the phosphoserine modification. Over residues 202-224 (SSKQPLSPGPQKTFQALQESSPQ) the composition is skewed to polar residues. The residue at position 268 (Thr268) is a Phosphothreonine. Residues 268-280 (TPDKEEFKQEEPK) show a composition bias toward basic and acidic residues. 14 C2H2-type zinc fingers span residues 347–370 (FICADCGVSFPQLSRLKAHQLRSH), 376–398 (FLCLCCGKSFGRSSILKLHMRTH), 404–426 (HACHLCGHRFRQSSHLSKHLLTH), 432–454 (FLCAECGRGFQRRASLVQHLLAH), 476–498 (VLCSHCGQSFQRRSSLKRHLRIH), 522–544 (FVCSDCGKAFRRSEHLVAHRRVH), 550–572 (FSCQACGRSFTQSSQLVSHQRVH), 578–600 (YACPQCGKRFVRRASLARHLLTH), 606–628 (HHCTQCGKSFGQTQDLARHQRSH), 634–656 (CRCSECGEGFSQSAHLARHQRIH), 662–684 (HACDTCGHRFRNSSNLARHRRSH), 690–712 (YSCQTCGRSFRRNAHLRRHLATH), 724–746 (QECVECGKSFSRSCNLLRHLLVH), and 752–774 (YSCTQCGRSFSRNSHLLRHLRTH). Gln483 carries the N5-methylglutamine modification. Residues 492-520 (KRHLRIHARDKDRRSSEGSGSRRRDSDRR) are disordered. Residues 498-520 (HARDKDRRSSEGSGSRRRDSDRR) show a composition bias toward basic and acidic residues.

In terms of assembly, interacts with POU5F1/OCT4 and SOX2. Post-translationally, methylated at Gln-483 by N6AMT1.

It localises to the nucleus. Its function is as follows. Embryonic stem (ES) cell-specific transcription factor required to maintain ES cell pluripotency. Can both activate and /or repress expression of target genes, depending on the context. Specifically binds the 5'-[GA]CGCNNGCG[CT]-3' DNA consensus sequence. Regulates expression of POU5F1/OCT4, ZSCAN4 and ALYREF/THOC4. This Homo sapiens (Human) protein is Zinc finger and SCAN domain-containing protein 10 (ZSCAN10).